The chain runs to 3483 residues: Nonribosomal peptide synthetase Ao415 (3483 aa).

Residues Thr281 to Val669 form an adenylation 1 region. Positions Glu775–Lys851 constitute a Carrier 1 domain. Ser812 carries the post-translational modification O-(pantetheine 4'-phosphoryl)serine. The segment at Ala886–Gln1297 is condensation 1. The tract at residues Thr1363–Val1758 is adenylation 2. One can recognise a Carrier 2 domain in the interval Glu1865–Asn1941. An O-(pantetheine 4'-phosphoryl)serine modification is found at Ser1901. Residues Ile1981–Ala2379 are condensation 2. Positions Thr2412–Lys2485 constitute a Carrier 3 domain. Residue Ser2446 is modified to O-(pantetheine 4'-phosphoryl)serine. The condensation 3 stretch occupies residues Glu2520 to Leu2917. The Carrier 4 domain maps to Asp2954–Gln3030. An O-(pantetheine 4'-phosphoryl)serine modification is found at Ser2991. The segment at Ser3084 to Thr3368 is condensation 4.

It belongs to the NRP synthetase family.

The protein operates within siderophore biosynthesis. Functionally, nonribosomal peptide synthetase; part of the gene cluster that mediates the biosynthesis of desferriferrichrome that chelates Fe(3+) to form ferrichrome. Fe(3+) is a key factor for induction of trap formation and the fungus uses the iron chelating desferriferrichrome to sequester Fe(3+) to inhibit trap formation and increase nematicidal activity. The biosynthesis of desferriferrichrome requires the action of the L-ornithine N(5)-oxygenase (LOO) Ao414 that hydroxylates L-ornithine at N(5), resulting in the formation of N(5)-hydroxyl-L-ornithine, which is subsequently N-acetylated to yield N(5)-acetyl-N(5)-hydroxy-L-ornithine (L-AHO). L-AHO harbors one hydroxamate moiety, which is the key core responsible for chelating iron. Then, L-AHO is further condensated with glycines to form desferriferrichrome through the NRPS protein Ao415. In Arthrobotrys oligospora (strain ATCC 24927 / CBS 115.81 / DSM 1491) (Nematode-trapping fungus), this protein is Nonribosomal peptide synthetase Ao415.